The sequence spans 384 residues: Spermidine/putrescine import ATP-binding protein PotA (384 aa).

The region spanning 6–238 is the ABC transporter domain; sequence ITFNNVSKTF…PINHFVANFI (233 aa). 40 to 47 lines the ATP pocket; it reads GASGSGKS.

It belongs to the ABC transporter superfamily. Spermidine/putrescine importer (TC 3.A.1.11.1) family. As to quaternary structure, the complex is composed of two ATP-binding proteins (PotA), two transmembrane proteins (PotB and PotC) and a solute-binding protein (PotD).

It localises to the cell membrane. It carries out the reaction ATP + H2O + polyamine-[polyamine-binding protein]Side 1 = ADP + phosphate + polyamineSide 2 + [polyamine-binding protein]Side 1.. Part of the ABC transporter complex PotABCD involved in spermidine/putrescine import. Responsible for energy coupling to the transport system. The protein is Spermidine/putrescine import ATP-binding protein PotA of Streptococcus pyogenes serotype M28 (strain MGAS6180).